The chain runs to 789 residues: Alpha-glucosidase 2 (789 aa).

Disordered stretches follow at residues 1–24 (MTGL…PRVI) and 512–531 (ELNP…ASHP). Aspartate 523 functions as the Proton donor in the catalytic mechanism. Glutamate 756 acts as the Proton acceptor in catalysis.

Belongs to the glycosyl hydrolase 63 family.

The protein operates within glycan metabolism; N-glycan degradation. The protein is Alpha-glucosidase 2 (GCS2) of Arabidopsis thaliana (Mouse-ear cress).